The sequence spans 1728 residues: MNVQACSRCGYGVYPAEKISCIDQTWHKACFHCEVCKMMLSVNNFVSHQKKPYCHAHNPKNNTFTSVYHTPLNLTLKKSVAAMGGIDGKEDGEPFKSVLHWDMKSKAGAGAASRLMNERDYWPGYAEGNTWCPGALPDPEIVRMVEARQSLGEGYTEDREQQQGKGSFPAMITPAYQRAKAANQLASQVQYKRGHDERVSTFTPVADTPELLRAKAGGQLQNDVRYTEDGGQQRGKGSFPAMITPAYQIAKRATELASDVRYHQQYHREMKGMASPVGAEGGMTKDSVDRCGQVYSEECDEPRGKGSFPAMITPAYQNAKKANELVSDIKYRQDFHKMKGAAHFHSLAAQDNLVLKRAQSVSKLVSEVEYKKGLENSKGHSINYCETPQFRNVSKISKFTSDNKYKENYQTQLRGHYDGVGMDRRMLHALKVGSLASNVAYKADYKHDVVDYNYLATATPFYQTTMRLVPLKDVNYRQNIDRMKFSSVTNTPQIVQAKINAQQLSHVNYRADYERNKLNYTLPQDAPQLLKAKANAELFSEVKYKEGWQKTKGKGFEMKLDAMSLLAAKASGELASSVKYKEEYEKMKGRALGATDSKLLHSLQVAKMSSEVEYKKGFEESKTHFNLPMDMVNLRHAKKAQALASDLDYRKKLHDYTVLPEDMKTQWAKKAYGLQSELQYKADLAWMRGVGWLTEGSLNLEQAKKAGQLISEKNYRQRVDELKFTSVADSSQMEHAKKSQGLQNAVAYKAGNEQSVHQYTISKDEPLFLRARANAAQLSETLYKSSWEKQKAKGFELRLDSLAFLTAKAKRDLASEVKYKEDYERSRGKLIGAKSAQGDSQMSHSLQMSKLQSDLEYKKGFEDTRSQCHISLDMVHLVHARQAQHLATDVGYRTASHCFTALPTDMKVEWAKKAYGLQSDNQYRADMKWMKGTGWVATGSLHVEQAKKAGELISEKKYRQHPDALKFTSIKDTPEMVQARISYTQAVDRLYREQGENVKHHYTQTADLPEVLLAKLNAMNISETRYKESWSRLRDGGYKLRLDALPFQAAKASSEVISDYKYKEAFERMKGQMLGSRSLEDDLSLAHSVHATSLQSDVNYKKGFEHAKAHFHLPLDMVTLVHAKKAQTLASDQDYRHPLPQHTVLAEDLRLSCAKKAHKLQSENLYRSDLNFMRGVPCVVPGTLEIEGRKKASELISESKYRQHPGSFKYTAVTDTPNLLHAKYSNQITNERLYKAAGEDARHQYTMTLGLPEFIRAKTNAANLSEAKYKEAWHNLRAQGYKLTIDALPFQAARASGDIASDFLYRHEFVKERGQLIGVRNVSDDPRLLHCLRMGQLQSENQYRKEAASSQAQCHLPMDMMYLVHARKAQALASDHDYRTQCHEFTALPEDLKMAWAKKAHALQSEFRYKADLMGMKGTGWLALQSPQIESAKKAGDLISETKYRKKPDSIKFTTVVDSPDLIHAKESYMHCNERLYRLGDAASLHRYTPIPDHPDFTRARMNAMHLSDKVYRNAWEQSRAGGYDFRLDAIPFQTARVSRDIASDFRYKEAFLRDRGLQIGYRSISDDPRTTHFLRVGRLQSDNEYRKAFAKGRSQFHSRADQPGFLQAKRSQQLASDVLYRQPLPQHTSDPEQLGLKHARKAHQLQSDVKYKSDLNLTRGVGWTPPGSYKVEMARRAAELANRRGPGIRGASVEPEAAAALGDHQSRGVNPDASEILHIHKKKTLLM.

The 61-residue stretch at 4-64 (QACSRCGYGV…HAHNPKNNTF (61 aa)) folds into the LIM zinc-binding domain. Nebulin repeat units follow at residues 173–200 (TPAY…ERVS), 201–235 (TFTP…QQRG), 244–271 (TPAY…REMK), 313–340 (TPAY…KMKG), 345–379 (HSLA…NSKG), 386–414 (ETPQ…TQLR), 416–450 (HYDG…HDVV), 484–518 (KFSS…RNKL), 519–553 (NYTL…KTKG), 555–589 (GFEM…KMKG), 599–623 (LLHS…ESKT), 624–658 (HFNL…DYTV), 659–689 (LPED…WMRG), 699–721 (NLEQ…RVDE), 723–757 (KFTS…QSVH), 758–792 (QYTI…KQKA), 794–828 (GFEL…RSRG), 841–866 (QMSH…DTRS), 867–893 (QCHI…VGYR), 898–932 (CFTA…WMKG), 943–960 (VEQA…KYRQ), 966–1000 (KFTS…NVKH), 1001–1035 (HYTQ…RLRD), 1037–1071 (GYKL…RMKG), 1075–1109 (GSRS…HAKA), 1110–1136 (HFHL…QDYR), 1141–1175 (QHTV…FMRG), 1180–1203 (VPGT…KYRQ), 1209–1243 (KYTA…DARH), 1244–1278 (QYTM…NLRA), 1280–1314 (GYKL…KERG), 1318–1352 (GVRN…SSQA), 1353–1379 (QCHL…HDYR), 1384–1418 (EFTA…GMKG), 1425–1446 (QSPQ…KYRK), 1452–1478 (KFTT…RLYR), 1487–1521 (RYTP…QSRA), 1523–1557 (GYDF…RDRG), 1561–1595 (GYRS…KGRS), 1596–1630 (QFHS…QHTS), and 1637–1661 (LKHA…LTRG). T203 is modified (phosphothreonine). At S1078 the chain carries Phosphoserine.

Interacts with actin, alpha-actinin, KLHL41, TLN1 and VCL. Interacts with CSRP3. As to expression, expressed in cardiac and skeletal muscle. Not detected in kidney, spleen, liver, brain, lung, stomach or uterus.

Functionally, may be involved in anchoring the terminal actin filaments in the myofibril to the membrane and in transmitting tension from the myofibrils to the extracellular matrix. The sequence is that of Nebulin-related-anchoring protein from Mus musculus (Mouse).